The primary structure comprises 25 residues: Ribosome-inactivating protein velutin (25 aa).

A disordered region spans residues 1 to 25 (XHPDLFXXRPDNTASPKFEDPRLNP).

Belongs to the ribosome-inactivating protein family.

It carries out the reaction Endohydrolysis of the N-glycosidic bond at one specific adenosine on the 28S rRNA.. In terms of biological role, inhibits protein synthesis but does not possess ribonuclease activity. Also inhibits HIV-1 reverse transcriptase, beta-glucosidase and beta-glucuronidase. This is Ribosome-inactivating protein velutin from Flammulina velutipes (Agaricus velutipes).